Consider the following 499-residue polypeptide: Lysine--tRNA ligase (499 aa).

E407 and E414 together coordinate Mg(2+).

It belongs to the class-II aminoacyl-tRNA synthetase family. As to quaternary structure, homodimer. Mg(2+) serves as cofactor.

It is found in the cytoplasm. The enzyme catalyses tRNA(Lys) + L-lysine + ATP = L-lysyl-tRNA(Lys) + AMP + diphosphate. The polypeptide is Lysine--tRNA ligase (Lactiplantibacillus plantarum (strain ATCC BAA-793 / NCIMB 8826 / WCFS1) (Lactobacillus plantarum)).